We begin with the raw amino-acid sequence, 192 residues long: Pyridoxal 5'-phosphate synthase subunit PdxT (192 aa).

53-55 (GES) contacts L-glutamine. The active-site Nucleophile is the Cys-82. L-glutamine contacts are provided by residues Arg-108 and 134 to 135 (IR). Residues His-170 and Glu-172 each act as charge relay system in the active site.

The protein belongs to the glutaminase PdxT/SNO family. In the presence of PdxS, forms a dodecamer of heterodimers. Only shows activity in the heterodimer.

It carries out the reaction aldehydo-D-ribose 5-phosphate + D-glyceraldehyde 3-phosphate + L-glutamine = pyridoxal 5'-phosphate + L-glutamate + phosphate + 3 H2O + H(+). The catalysed reaction is L-glutamine + H2O = L-glutamate + NH4(+). The protein operates within cofactor biosynthesis; pyridoxal 5'-phosphate biosynthesis. In terms of biological role, catalyzes the hydrolysis of glutamine to glutamate and ammonia as part of the biosynthesis of pyridoxal 5'-phosphate. The resulting ammonia molecule is channeled to the active site of PdxS. This chain is Pyridoxal 5'-phosphate synthase subunit PdxT, found in Methanothermobacter thermautotrophicus (strain ATCC 29096 / DSM 1053 / JCM 10044 / NBRC 100330 / Delta H) (Methanobacterium thermoautotrophicum).